We begin with the raw amino-acid sequence, 938 residues long: Isoleucine--tRNA ligase (938 aa).

Positions 58–68 (PYANGNIHIGH) match the 'HIGH' region motif. Glutamate 562 contributes to the L-isoleucyl-5'-AMP binding site. The 'KMSKS' region motif lies at 603–607 (KMSKS). Position 606 (lysine 606) interacts with ATP. Residues cysteine 901, cysteine 904, cysteine 921, and cysteine 924 each coordinate Zn(2+).

Belongs to the class-I aminoacyl-tRNA synthetase family. IleS type 1 subfamily. Monomer. Zn(2+) is required as a cofactor.

Its subcellular location is the cytoplasm. The catalysed reaction is tRNA(Ile) + L-isoleucine + ATP = L-isoleucyl-tRNA(Ile) + AMP + diphosphate. Its function is as follows. Catalyzes the attachment of isoleucine to tRNA(Ile). As IleRS can inadvertently accommodate and process structurally similar amino acids such as valine, to avoid such errors it has two additional distinct tRNA(Ile)-dependent editing activities. One activity is designated as 'pretransfer' editing and involves the hydrolysis of activated Val-AMP. The other activity is designated 'posttransfer' editing and involves deacylation of mischarged Val-tRNA(Ile). In Actinobacillus pleuropneumoniae serotype 7 (strain AP76), this protein is Isoleucine--tRNA ligase.